The sequence spans 255 residues: 1-(5-phosphoribosyl)-5-[(5-phosphoribosylamino)methylideneamino] imidazole-4-carboxamide isomerase (255 aa).

Asp8 (proton acceptor) is an active-site residue. Residue Asp129 is the Proton donor of the active site.

The protein belongs to the HisA/HisF family.

It is found in the cytoplasm. It carries out the reaction 1-(5-phospho-beta-D-ribosyl)-5-[(5-phospho-beta-D-ribosylamino)methylideneamino]imidazole-4-carboxamide = 5-[(5-phospho-1-deoxy-D-ribulos-1-ylimino)methylamino]-1-(5-phospho-beta-D-ribosyl)imidazole-4-carboxamide. It functions in the pathway amino-acid biosynthesis; L-histidine biosynthesis; L-histidine from 5-phospho-alpha-D-ribose 1-diphosphate: step 4/9. The polypeptide is 1-(5-phosphoribosyl)-5-[(5-phosphoribosylamino)methylideneamino] imidazole-4-carboxamide isomerase (Parasynechococcus marenigrum (strain WH8102)).